The primary structure comprises 101 residues: Anti-sigma factor RshA (101 aa).

Residues 9–15 (DAHADHD) form an inhibits SigH sigma factor activity region. C23 provides a ligand contact to iron-sulfur cluster. Inhibits SigH sigma factor activity regions lie at residues 28 to 34 (AEVWTLL) and 38 to 44 (CTPETRE). Iron-sulfur cluster contacts are provided by H49, C53, and C56. T94 bears the Phosphothreonine mark.

The protein belongs to the zinc-associated anti-sigma factor (ZAS) superfamily. In terms of assembly, interacts with cognate sigma factor SigH under reducing conditions. Binding inhibits the interaction of SigH with the RNA polymerase catalytic core. Iron-sulfur cluster is required as a cofactor. Phosphorylated, probably by PknB. Phosphorylation decreases interaction with SigH, leading to increased SigH-mediated transcription.

An redox-regulated anti-sigma factor for extracytoplasmic function (ECF) sigma factor SigH. ECF sigma factors are held in an inactive form by a cognate anti-sigma factor. RshA and some peptides derived from it inhibit the sigma factor activity of SigH. Probably releases SigH during oxidative stress. This is Anti-sigma factor RshA (rshA) from Mycobacterium tuberculosis (strain CDC 1551 / Oshkosh).